We begin with the raw amino-acid sequence, 266 residues long: Putative carbamate hydrolase RutD (266 aa).

The AB hydrolase-1 domain maps to Pro14–Leu115.

This sequence belongs to the AB hydrolase superfamily. Hydrolase RutD family.

It catalyses the reaction carbamate + 2 H(+) = NH4(+) + CO2. Functionally, involved in pyrimidine catabolism. May facilitate the hydrolysis of carbamate, a reaction that can also occur spontaneously. In Shigella flexneri serotype 5b (strain 8401), this protein is Putative carbamate hydrolase RutD.